Reading from the N-terminus, the 110-residue chain is UPF0060 membrane protein PFL_4337 (110 aa).

4 helical membrane passes run 5-25 (LWFFLAALFEIAGCYAFWMWL), 31-51 (ALWVIPALVSLTLFALLLTKV), 59-79 (AYAAYGGIYIVASIGWLAVVE), and 84-104 (LGSDWLGLALCVIGASVILFG).

This sequence belongs to the UPF0060 family.

Its subcellular location is the cell inner membrane. The sequence is that of UPF0060 membrane protein PFL_4337 from Pseudomonas fluorescens (strain ATCC BAA-477 / NRRL B-23932 / Pf-5).